Here is a 407-residue protein sequence, read N- to C-terminus: Putative F-box protein At5g60560 (407 aa).

An F-box domain is found at 2 to 49; it reads TMMSDLSEDLVEEILCRVSITSLGAVRSTCKGWYVLSKTRVLCKAETK.

The polypeptide is Putative F-box protein At5g60560 (Arabidopsis thaliana (Mouse-ear cress)).